A 107-amino-acid chain; its full sequence is UPF0145 protein LVIS_1527 (107 aa).

The protein belongs to the UPF0145 family.

The chain is UPF0145 protein LVIS_1527 from Levilactobacillus brevis (strain ATCC 367 / BCRC 12310 / CIP 105137 / JCM 1170 / LMG 11437 / NCIMB 947 / NCTC 947) (Lactobacillus brevis).